The primary structure comprises 35 residues: Mu-theraphotoxin-Ca2a (35 aa).

3 disulfides stabilise this stretch: cysteine 2/cysteine 17, cysteine 9/cysteine 24, and cysteine 16/cysteine 31.

This sequence belongs to the neurotoxin 10 (Hwtx-1) family. 10 (haplotoxin-1) subfamily. In terms of tissue distribution, expressed by the venom gland.

It is found in the secreted. Functionally, potently inhibits Nav1.7/SCN9A (IC(50)=98.1 nM), and moderately inhibits Nav1.2/SCN2A (IC(50)=216.3 nM), Nav1.6/SCN8A (IC(50)=313.6 nM), and Nav1.3/SCN3A (IC(50)=491.3 nM). Hyperpolarizes the slow inactivation, but does not alter the voltage-dependent activation or fast inactivation of Nav1.7/SCN9A. Binds with Nav1.7/SCN9A at the extracellular S3-S4 linker of domain II (site 4). In vivo, exhibits dose-dependent analgesic efficacy by reducing pain responses in rodent models of formalin-induced paw licking, hot plate test, and acetic acid-induced writhing. The polypeptide is Mu-theraphotoxin-Ca2a (Cyriopagopus albostriatus (Cambodian tiger tarantula)).